The sequence spans 309 residues: MAATLRELRGRIRSAGSIKKITKAQELIATSRIAKAQARVEAARPYSAEITSMLTELASASALDHPLLVARENPRRAAVLVVSSDRGLCGAYNANVLRQAEELFSLLREEGKEPVLYTVGRKALGYFSFRQREVVESWAGFSERPTYENAREIADTLVTAFMSGADDEGDDAGADGILGVDELHIVFTEFKSMLSQSAAARRIAPMVVEYVGDEQPEEGPQTLFSFEPDPETLFDALLPRYVATRVYAALLEAAASESASRRRAMKSATDNADDLIKALTLAANRERQAQITQEISEIVGGANALADAK.

It belongs to the ATPase gamma chain family. As to quaternary structure, F-type ATPases have 2 components, CF(1) - the catalytic core - and CF(0) - the membrane proton channel. CF(1) has five subunits: alpha(3), beta(3), gamma(1), delta(1), epsilon(1). CF(0) has three main subunits: a, b and c.

Its subcellular location is the cell membrane. In terms of biological role, produces ATP from ADP in the presence of a proton gradient across the membrane. The gamma chain is believed to be important in regulating ATPase activity and the flow of protons through the CF(0) complex. This Mycolicibacterium vanbaalenii (strain DSM 7251 / JCM 13017 / BCRC 16820 / KCTC 9966 / NRRL B-24157 / PYR-1) (Mycobacterium vanbaalenii) protein is ATP synthase gamma chain.